The primary structure comprises 908 residues: Flap endonuclease GEN homolog 1 (908 aa).

The segment at 2–96 is XPG-N domain; the sequence is GVNDLWQILE…SKRTQTRYGP (95 aa). Mg(2+) is bound by residues Asp30, Glu75, Glu134, Glu136, Asp155, Asp157, and Asp208. Positions 122–208 are XPG-I domain; that stretch reads ECLGMPWVQA…VGLAVLLGCD (87 aa). Positions 208–383 are 5'-3' exonuclease domain; sequence DYLPKGVPGV…LLVLLTRYDM (176 aa). A chromodomain region spans residues 389–463; that stretch reads GRKTSNQLQP…VYQKQLSETK (75 aa). Disordered stretches follow at residues 460 to 482, 629 to 650, 792 to 834, and 853 to 886; these read SETKGRKQKSMKNKPKGSHLPEA, YESEQGTSDSEGSGRDLQQSNP, RDSS…NKLR, and AEDEENGFSDLGRSPQSFRPCHDKDENSTASWEN. The span at 465–476 shows a compositional bias: basic residues; sequence RKQKSMKNKPKG. Residues Ser794 and Ser795 each carry the phosphoserine modification. Over residues 824–834 the composition is skewed to basic and acidic residues; that stretch reads HVRDSTHNKLR.

The protein belongs to the XPG/RAD2 endonuclease family. GEN subfamily. As to quaternary structure, largely monomeric, dimerizes on the Holliday junction and the first nick occurs upon dimerization at the junction. Mg(2+) is required as a cofactor. Expressed in bone marrow and testis and to a lesser extent in thymus, spleen, brain and colon.

The protein resides in the nucleus. Endonuclease which resolves Holliday junctions (HJs) by the introduction of symmetrically related cuts across the junction point, to produce nicked duplex products in which the nicks can be readily ligated. Four-way DNA intermediates, also known as Holliday junctions, are formed during homologous recombination and DNA repair, and their resolution is necessary for proper chromosome segregation. Cleaves HJs by a nick and counter-nick mechanism involving dual coordinated incisions that lead to the formation of ligatable nicked duplex products. Cleavage of the first strand is rate limiting, while second strand cleavage is rapid. Largely monomeric, dimerizes on the HJ and the first nick occurs upon dimerization at the junction. Efficiently cleaves both single and double HJs contained within large recombination intermediates. Exhibits a weak sequence preference for incision between two G residues that reside in a T-rich region of DNA. Also has endonuclease activity on 5'-flap and replication fork (RF) DNA substrates. This is Flap endonuclease GEN homolog 1 (Gen1) from Mus musculus (Mouse).